We begin with the raw amino-acid sequence, 1029 residues long: Protein phosphatase 1 regulatory subunit 12A (1029 aa).

The KVKF motif motif lies at 35-38; sequence KVKF. ANK repeat units lie at residues 39-68, 72-101, 105-134, 138-164, 198-227, and 231-260; these read DDGA…DINY, DGLT…NINQ, EGWI…HVGA, EGDT…RQGV, SGGT…DVNI, and DGWT…DMET. (3S)-3-hydroxyasparagine; by HIF1AN occurs at positions 67 and 100. At Asn226 the chain carries (3S)-3-hydroxyasparagine; by HIF1AN. Residues 290–786 are disordered; the sequence is LHSEKRDKKS…APSSSSLSTL (497 aa). The span at 291-300 shows a compositional bias: basic and acidic residues; it reads HSEKRDKKSP. Residue Ser299 is modified to Phosphoserine. Residues 302-314 are compositionally biased toward polar residues; the sequence is IESTANMENNQPQ. Positions 318–353 are enriched in basic and acidic residues; that stretch reads KNKETLIIEPEKNASRIESLEHEKADEEEEGKKDES. Residues 357–369 are compositionally biased toward acidic residues; sequence SEEDEEDDSESEA. The span at 385–402 shows a compositional bias: low complexity; that stretch reads TSSTQAAPAAVTAPTLSS. Residues Ser422 and Ser432 each carry the phosphoserine modification. Over residues 422–432 the composition is skewed to basic and acidic residues; the sequence is SPKEEERKDES. Thr443 carries the post-translational modification Phosphothreonine. Position 445 is a phosphoserine; by NUAK1 (Ser445). Residue Tyr446 is modified to Phosphotyrosine. A compositionally biased stretch (low complexity) spans 469–480; that stretch reads RSASSPRLSSSL. Ser472 is subject to Phosphoserine; by NUAK1. A Phosphoserine; by CDK1 modification is found at Ser473. Position 477 is a phosphoserine (Ser477). Basic and acidic residues predominate over residues 481 to 491; sequence DNKEKEKDNKG. 2 positions are modified to phosphoserine: Ser507 and Ser509. Over residues 540–551 the composition is skewed to polar residues; sequence NSSINEGSTYHR. Residues 564 to 578 are compositionally biased toward low complexity; it reads SCSVPSTTSTPTVTS. Residues 585–594 show a composition bias toward polar residues; it reads SLPSSTSTAA. The segment covering 596–610 has biased composition (low complexity); it reads TPPGSSSAGTQSSTS. A phosphoserine mark is found at Ser601 and Ser618. Residues 614–625 are compositionally biased toward basic and acidic residues; it reads WAEDSTEKEKDS. Low complexity predominate over residues 626-656; the sequence is APTAVTIPVAPTVVNAAAPSTTTLTTTTAGT. The segment covering 671 to 680 has biased composition (basic and acidic residues); sequence VRDEESESQR. The tract at residues 680-863 is interaction with ROCK2; it reads RKARSRQARQ…VSFWTQDSDE (184 aa). Residues 681–691 show a composition bias toward basic residues; it reads KARSRQARQSR. Phosphoserine; by PKA and PKG; in vitro is present on residues Ser690 and Ser693. Thr694 is subject to Phosphothreonine; by ROCK1, ROCK2, CDC42BP, ZIPK/DAPK3 and RAF1. Positions 716–765 are enriched in basic and acidic residues; that stretch reads RTREQENEEKEKEEKEKQDKEKQEEKKESEASREDEYKQKYSRTYDETYT. Positions 771-786 are enriched in low complexity; sequence STSSSSAPSSSSLSTL. A Phosphoserine modification is found at Ser801. The segment at 808–927 is disordered; the sequence is AYSRGLAKEN…PYSSRLEKDD (120 aa). The segment covering 813 to 839 has biased composition (basic and acidic residues); the sequence is LAKENEREGEKKEEEKEGEDKSQPKSI. Basic residues predominate over residues 840-851; that stretch reads RERRRPREKRRS. A Phosphoserine; by ROCK2 modification is found at Ser851. 2 positions are modified to phosphoserine: Ser861 and Ser870. Over residues 866 to 882 the composition is skewed to basic and acidic residues; it reads QERQSDTEDGSSKRETQ. Positions 883–897 are enriched in low complexity; that stretch reads TDSVSRYDSSSTSSS. A phosphoserine mark is found at Ser902 and Ser907. Ser909 is subject to Phosphoserine; by NUAK1. Basic and acidic residues predominate over residues 913–927; it reads LEDRKPYSSRLEKDD. Residue Ser994 is modified to Phosphoserine.

In terms of assembly, PP1 comprises a catalytic subunit, PPP1CA, PPP1CB or PPP1CC, and one or several targeting or regulatory subunits. PPP1R12A mediates binding to myosin. Interacts with ARHA and CIT. Binds PPP1R12B, ROCK1 and IL16. Interacts directly with PRKG1. Non-covalent dimer of 2 dimers; PRKG1-PRKG1 and PPP1R12A-PPP1R12A. Interacts with SMTNL1. Interacts with PPP1CB; the interaction is direct. Interacts (when phosphorylated at Ser-445, Ser-472 and Ser-910) with 14-3-3. Interacts with ROCK1 and ROCK2. Interacts with isoform 1 and isoform 2 of ZIPK/DAPK3. Interacts with RAF1. Interacts with HIF1AN. Interacts with NCKAP1L. Post-translationally, phosphorylated by CIT (Rho-associated kinase). Phosphorylated cooperatively by ROCK1 and CDC42BP on Thr-694. Phosphorylated on upon DNA damage, probably by ATM or ATR. In vitro, phosphorylation of Ser-693 by PKA and PKG appears to prevent phosphorylation of the inhibitory site Thr-694, probably mediated by PRKG1. Phosphorylation at Ser-445, Ser-472 and Ser-909 by NUAK1 promotes interaction with 14-3-3, leading to inhibit interaction with myosin light chain MLC2, preventing dephosphorylation of MLC2. May be phosphorylated at Thr-694 by DMPK; may inhibit the myosin phosphatase activity. Phosphorylated at Ser-473 by CDK1 during mitosis, creating docking sites for the POLO box domains of PLK1. Subsequently, PLK1 binds and phosphorylates PPP1R12A. As to expression, expressed in striated and vascular smooth muscle, specificcally in type 2a fibers (at protein level). Expression levels are 20-30% higher in developed males than females (at protein level).

It localises to the cytoplasm. The protein localises to the cytoskeleton. It is found in the stress fiber. Key regulator of protein phosphatase 1C (PPP1C). Mediates binding to myosin. As part of the PPP1C complex, involved in dephosphorylation of PLK1. Capable of inhibiting HIF1AN-dependent suppression of HIF1A activity. The polypeptide is Protein phosphatase 1 regulatory subunit 12A (Mus musculus (Mouse)).